The chain runs to 441 residues: Tubulin alpha chain (441 aa).

Residues Gln-11, Glu-68, Ser-137, Gly-141, Thr-142, Thr-176, Asn-203, and Asn-224 each coordinate GTP. Position 68 (Glu-68) interacts with Mg(2+). The active site involves Glu-250.

This sequence belongs to the tubulin family. In terms of assembly, dimer of alpha and beta chains. A typical microtubule is a hollow water-filled tube with an outer diameter of 25 nm and an inner diameter of 15 nM. Alpha-beta heterodimers associate head-to-tail to form protofilaments running lengthwise along the microtubule wall with the beta-tubulin subunit facing the microtubule plus end conferring a structural polarity. Microtubules usually have 13 protofilaments but different protofilament numbers can be found in some organisms and specialized cells. Mg(2+) serves as cofactor.

The protein resides in the cytoplasm. The protein localises to the cytoskeleton. It carries out the reaction GTP + H2O = GDP + phosphate + H(+). In terms of biological role, tubulin is the major constituent of microtubules, a cylinder consisting of laterally associated linear protofilaments composed of alpha- and beta-tubulin heterodimers. Microtubules grow by the addition of GTP-tubulin dimers to the microtubule end, where a stabilizing cap forms. Below the cap, tubulin dimers are in GDP-bound state, owing to GTPase activity of alpha-tubulin. The chain is Tubulin alpha chain (TUB1) from Encephalitozoon cuniculi (strain GB-M1) (Microsporidian parasite).